Here is a 160-residue protein sequence, read N- to C-terminus: Phosphopantetheine adenylyltransferase (160 aa).

Residue Thr10 participates in substrate binding. ATP-binding positions include 10 to 11 and His18; that span reads TF. Residues Lys42, Met74, and Arg88 each coordinate substrate. Residues 89–91, Glu99, and 124–130 each bind ATP; these read GLR and LSFLSSS.

It belongs to the bacterial CoaD family. In terms of assembly, homohexamer. Requires Mg(2+) as cofactor.

The protein localises to the cytoplasm. The catalysed reaction is (R)-4'-phosphopantetheine + ATP + H(+) = 3'-dephospho-CoA + diphosphate. It participates in cofactor biosynthesis; coenzyme A biosynthesis; CoA from (R)-pantothenate: step 4/5. Functionally, reversibly transfers an adenylyl group from ATP to 4'-phosphopantetheine, yielding dephospho-CoA (dPCoA) and pyrophosphate. This chain is Phosphopantetheine adenylyltransferase, found in Photorhabdus laumondii subsp. laumondii (strain DSM 15139 / CIP 105565 / TT01) (Photorhabdus luminescens subsp. laumondii).